The following is a 173-amino-acid chain: RxLR effector protein PITG_10232 (173 aa).

Positions 1 to 24 (MRLGYLIVGCAVALLATTDGVVDA) are cleaved as a signal peptide. Positions 25–64 (SSKHKQLSTDVPRPADDISSERFLRSQDTPEDDGNPAHED) are disordered. A compositionally biased stretch (basic and acidic residues) spans 37-49 (RPADDISSERFLR). Positions 46–65 (RFLRSQDTPEDDGNPAHEDR) match the RxLR-dEER motif.

This sequence belongs to the RxLR effector family.

The protein localises to the secreted. The protein resides in the host nucleus. It is found in the host cytoplasm. Functionally, effector that leads to host programmed cell death. This chain is RxLR effector protein PITG_10232, found in Phytophthora infestans (strain T30-4) (Potato late blight agent).